The primary structure comprises 282 residues: Bis(5'-nucleosyl)-tetraphosphatase, symmetrical (282 aa).

It belongs to the Ap4A hydrolase family. As to quaternary structure, monomer.

The catalysed reaction is P(1),P(4)-bis(5'-adenosyl) tetraphosphate + H2O = 2 ADP + 2 H(+). In terms of biological role, hydrolyzes diadenosine 5',5'''-P1,P4-tetraphosphate to yield ADP. The chain is Bis(5'-nucleosyl)-tetraphosphatase, symmetrical from Escherichia coli O157:H7.